Consider the following 84-residue polypeptide: UPF0473 protein CLI_2624 (84 aa).

Belongs to the UPF0473 family.

The chain is UPF0473 protein CLI_2624 from Clostridium botulinum (strain Langeland / NCTC 10281 / Type F).